Reading from the N-terminus, the 228-residue chain is L-ribulose-5-phosphate 4-epimerase UlaF (228 aa).

Substrate is bound by residues 26–27 (GN), 43–44 (SG), and 72–73 (SS). The Zn(2+) site is built by Asp74, His93, and His95. Catalysis depends on Asp118, which acts as the Proton donor/acceptor. His167 contributes to the Zn(2+) binding site. Tyr225 (proton donor/acceptor) is an active-site residue.

It belongs to the aldolase class II family. AraD/FucA subfamily. Requires Zn(2+) as cofactor.

It carries out the reaction L-ribulose 5-phosphate = D-xylulose 5-phosphate. It participates in cofactor degradation; L-ascorbate degradation; D-xylulose 5-phosphate from L-ascorbate: step 4/4. In terms of biological role, catalyzes the isomerization of L-ribulose 5-phosphate to D-xylulose 5-phosphate. Is involved in the anaerobic L-ascorbate utilization. This chain is L-ribulose-5-phosphate 4-epimerase UlaF, found in Escherichia fergusonii (strain ATCC 35469 / DSM 13698 / CCUG 18766 / IAM 14443 / JCM 21226 / LMG 7866 / NBRC 102419 / NCTC 12128 / CDC 0568-73).